Here is a 328-residue protein sequence, read N- to C-terminus: Probable nicotianamine synthase 6 (328 aa).

It belongs to the nicotianamine synthase (NAS)-like family.

The enzyme catalyses 3 S-adenosyl-L-methionine = nicotianamine + 3 S-methyl-5'-thioadenosine + 3 H(+). Synthesizes nicotianamine, a polyamine that is the first intermediate in the synthesis of the phytosiderophores of the mugineic acid type found in gramineae which serves as a sensor for the physiological iron status within the plant, and/or might be involved in the transport of iron. This chain is Probable nicotianamine synthase 6 (NAS6), found in Hordeum vulgare (Barley).